The sequence spans 357 residues: Fructose-1,6-bisphosphatase class 1 3 (357 aa).

Mg(2+) is bound by residues glutamate 94, aspartate 116, leucine 118, and aspartate 119. Residues 119 to 122 (DGSS) and asparagine 211 each bind substrate. Residue glutamate 283 participates in Mg(2+) binding.

It belongs to the FBPase class 1 family. As to quaternary structure, homotetramer. The cofactor is Mg(2+).

It localises to the cytoplasm. The enzyme catalyses beta-D-fructose 1,6-bisphosphate + H2O = beta-D-fructose 6-phosphate + phosphate. It functions in the pathway carbohydrate biosynthesis; Calvin cycle. In Methylibium petroleiphilum (strain ATCC BAA-1232 / LMG 22953 / PM1), this protein is Fructose-1,6-bisphosphatase class 1 3.